We begin with the raw amino-acid sequence, 120 residues long: Large ribosomal subunit protein uL18 (120 aa).

Belongs to the universal ribosomal protein uL18 family. As to quaternary structure, part of the 50S ribosomal subunit; part of the 5S rRNA/L5/L18/L25 subcomplex. Contacts the 5S and 23S rRNAs.

This is one of the proteins that bind and probably mediate the attachment of the 5S RNA into the large ribosomal subunit, where it forms part of the central protuberance. This is Large ribosomal subunit protein uL18 from Rhizobium rhizogenes (strain K84 / ATCC BAA-868) (Agrobacterium radiobacter).